Here is a 66-residue protein sequence, read N- to C-terminus: Large ribosomal subunit protein uL29 (66 aa).

It belongs to the universal ribosomal protein uL29 family.

This chain is Large ribosomal subunit protein uL29, found in Geobacillus thermodenitrificans (strain NG80-2).